The following is a 185-amino-acid chain: ATP synthase subunit delta (185 aa).

It belongs to the ATPase delta chain family. In terms of assembly, F-type ATPases have 2 components, F(1) - the catalytic core - and F(0) - the membrane proton channel. F(1) has five subunits: alpha(3), beta(3), gamma(1), delta(1), epsilon(1). F(0) has three main subunits: a(1), b(2) and c(10-14). The alpha and beta chains form an alternating ring which encloses part of the gamma chain. F(1) is attached to F(0) by a central stalk formed by the gamma and epsilon chains, while a peripheral stalk is formed by the delta and b chains.

The protein resides in the cell inner membrane. Functionally, f(1)F(0) ATP synthase produces ATP from ADP in the presence of a proton or sodium gradient. F-type ATPases consist of two structural domains, F(1) containing the extramembraneous catalytic core and F(0) containing the membrane proton channel, linked together by a central stalk and a peripheral stalk. During catalysis, ATP synthesis in the catalytic domain of F(1) is coupled via a rotary mechanism of the central stalk subunits to proton translocation. Its function is as follows. This protein is part of the stalk that links CF(0) to CF(1). It either transmits conformational changes from CF(0) to CF(1) or is implicated in proton conduction. The sequence is that of ATP synthase subunit delta from Pelagibacter ubique (strain HTCC1062).